Consider the following 310-residue polypeptide: Probable endonuclease 4 (310 aa).

The segment at 1 to 31 is disordered; it reads MNNQQSRGALGTSGATPDLPDATPGLSRNPV. The Zn(2+) site is built by histidine 94, histidine 134, glutamate 173, aspartate 207, histidine 210, histidine 244, aspartate 257, histidine 259, and glutamate 289.

It belongs to the AP endonuclease 2 family. It depends on Zn(2+) as a cofactor.

It catalyses the reaction Endonucleolytic cleavage to 5'-phosphooligonucleotide end-products.. Endonuclease IV plays a role in DNA repair. It cleaves phosphodiester bonds at apurinic or apyrimidinic (AP) sites, generating a 3'-hydroxyl group and a 5'-terminal sugar phosphate. The protein is Probable endonuclease 4 of Streptomyces avermitilis (strain ATCC 31267 / DSM 46492 / JCM 5070 / NBRC 14893 / NCIMB 12804 / NRRL 8165 / MA-4680).